Reading from the N-terminus, the 755-residue chain is Exocyst complex component 3 (755 aa).

Residue Lys-38 is modified to N6-acetyllysine.

The protein belongs to the SEC6 family. The exocyst complex is composed of EXOC1, EXOC2, EXOC3, EXOC4, EXOC5, EXOC6, EXOC7 and EXOC8. Interacts with EXOC3L1. Interacts with BIRC6/bruce. Interacts with MYRIP. Interacts with SLC6A9.

It is found in the cytoplasm. The protein localises to the perinuclear region. It localises to the cell projection. The protein resides in the growth cone. Its subcellular location is the midbody. It is found in the golgi apparatus. The protein localises to the neuron projection. Its function is as follows. Component of the exocyst complex involved in the docking of exocytic vesicles with fusion sites on the plasma membrane. This chain is Exocyst complex component 3 (Exoc3), found in Mus musculus (Mouse).